The sequence spans 372 residues: Cytochrome b (372 aa).

Helical transmembrane passes span 32 to 52, 77 to 99, 114 to 134, and 180 to 200; these read LGFNLGVMIALQILVGICLSW, FIIRSLHIIFTSLLYFLLYIHII, VWFFGFLIFIFILIIAFIGYT, and LHSIHIFLPFVLLFLIGAHFF. Heme b contacts are provided by H83 and H97. Positions 184 and 198 each coordinate heme b. H203 contacts a ubiquinone. 4 helical membrane-spanning segments follow: residues 228 to 248, 297 to 317, 330 to 350, and 351 to 371; these read YYLRDLFLIINILCFLIYYIC, LLFVLCFALFLFILNCILIFI, LVLFYYLCVGGFLSLYVVLCF, and PLWMEIQFWVLLLFCFIVCRL.

It belongs to the cytochrome b family. As to quaternary structure, the main subunits of complex b-c1 are: cytochrome b, cytochrome c1 and the Rieske protein. It depends on heme b as a cofactor.

It is found in the mitochondrion inner membrane. Component of the ubiquinol-cytochrome c reductase complex (complex III or cytochrome b-c1 complex) that is part of the mitochondrial respiratory chain. The b-c1 complex mediates electron transfer from ubiquinol to cytochrome c. Contributes to the generation of a proton gradient across the mitochondrial membrane that is then used for ATP synthesis. This chain is Cytochrome b (MT-CYB), found in Trypanoplasma borreli.